A 191-amino-acid chain; its full sequence is Guanylate kinase (191 aa).

The 179-residue stretch at 9 to 187 (GQLIVITGPS…SLIALETAIF (179 aa)) folds into the Guanylate kinase-like domain. 16-23 (GPSGVGKG) contacts ATP.

It belongs to the guanylate kinase family.

It is found in the cytoplasm. It catalyses the reaction GMP + ATP = GDP + ADP. In terms of biological role, essential for recycling GMP and indirectly, cGMP. The protein is Guanylate kinase of Thermosynechococcus vestitus (strain NIES-2133 / IAM M-273 / BP-1).